Reading from the N-terminus, the 269-residue chain is Fructose-2,6-bisphosphatase TIGAR (269 aa).

Histidine 11 (tele-phosphohistidine intermediate) is an active-site residue. Glutamate 89 acts as the Proton donor/acceptor in catalysis.

Belongs to the phosphoglycerate mutase family. As to quaternary structure, interacts with HK2; the interaction increases hexokinase HK2 activity in a hypoxia- and HIF1A-dependent manner, resulting in the regulation of mitochondrial membrane potential, thus increasing NADPH production and decreasing intracellular ROS levels. As to expression, expressed in olfactory bulb, cerebellum, and cortex. Expressed in neurons and astrocytes (at protein level). Expressed in intestinal crypt.

It is found in the cytoplasm. The protein resides in the nucleus. The protein localises to the mitochondrion. It carries out the reaction beta-D-fructose 2,6-bisphosphate + H2O = beta-D-fructose 6-phosphate + phosphate. Fructose-bisphosphatase hydrolyzing fructose-2,6-bisphosphate as well as fructose-1,6-bisphosphate. Acts as a negative regulator of glycolysis by lowering intracellular levels of fructose-2,6-bisphosphate in a p53/TP53-dependent manner, resulting in the pentose phosphate pathway (PPP) activation and NADPH production. Contributes to the generation of reduced glutathione to cause a decrease in intracellular reactive oxygen species (ROS) content, correlating with its ability to protect cells from oxidative or metabolic stress-induced cell death. Plays a role in promoting protection against cell death during hypoxia by decreasing mitochondria ROS levels in a HK2-dependent manner through a mechanism that is independent of its fructose-bisphosphatase activity. In response to cardiac damage stress, mediates p53-induced inhibition of myocyte mitophagy through ROS levels reduction and the subsequent inactivation of BNIP3. Reduced mitophagy results in an enhanced apoptotic myocyte cell death, and exacerbates cardiac damage. Plays a role in adult intestinal regeneration; contributes to the growth, proliferation and survival of intestinal crypts following tissue ablation. Plays a neuroprotective role against ischemic brain damage by enhancing PPP flux and preserving mitochondria functions. Protects glioma cells from hypoxia- and ROS-induced cell death by inhibiting glycolysis and activating mitochondrial energy metabolism and oxygen consumption in a TKTL1-dependent and p53/TP53-independent manner. Plays a role in cancer cell survival by promoting DNA repair through activating PPP flux in a CDK5-ATM-dependent signaling pathway during hypoxia and/or genome stress-induced DNA damage responses. Involved in intestinal tumor progression. The sequence is that of Fructose-2,6-bisphosphatase TIGAR from Mus musculus (Mouse).